Reading from the N-terminus, the 239-residue chain is Ribosomal RNA small subunit methyltransferase G (239 aa).

Residues G76, F81, 99–101 (DSS), 128–129 (IE), and R147 contribute to the S-adenosyl-L-methionine site.

Belongs to the methyltransferase superfamily. RNA methyltransferase RsmG family.

The protein resides in the cytoplasm. Specifically methylates the N7 position of a guanine in 16S rRNA. The protein is Ribosomal RNA small subunit methyltransferase G of Prochlorococcus marinus subsp. pastoris (strain CCMP1986 / NIES-2087 / MED4).